A 173-amino-acid polypeptide reads, in one-letter code: uncharacterized protein (173 aa).

This is an uncharacterized protein from Mycobacterium tuberculosis (strain CDC 1551 / Oshkosh).